We begin with the raw amino-acid sequence, 216 residues long: Somatotropin (216 aa).

An N-terminal signal peptide occupies residues 1–25 (MAPGSWFSPLLIAVVTLGLPQEAAA). H45 provides a ligand contact to Zn(2+). Cysteines 78 and 189 form a disulfide. E198 lines the Zn(2+) pocket. C206 and C214 are oxidised to a cystine.

This sequence belongs to the somatotropin/prolactin family.

It is found in the secreted. Its function is as follows. Growth hormone plays an important role in growth control. In Gallus gallus (Chicken), this protein is Somatotropin (GH).